The sequence spans 221 residues: Deep sea actinoporin Cjtox II (221 aa).

The first 19 residues, 1–19 (MNRLIIVCLVAAMIYSTIA), serve as a signal peptide directing secretion. The propeptide occupies 20-42 (LPMKEDISNDERPISVNEEPVKK). Residues Ser96, Val129, Ser147, Pro149, Tyr175, Tyr179, and Tyr180 each coordinate phosphocholine. Positions 147 to 162 (SVPYDYNWYENWWNIK) are trp-rich region, which is important for the binding to lipid membrane. The Cell attachment site, crucial for protein stability motif lies at 186–188 (KGD).

Belongs to the actinoporin family. Sea anemone subfamily. In terms of assembly, octamer or nonamer in membranes. Monomer in the soluble state. In terms of tissue distribution, expressed in actinopharynx and in gastric filaments. Is not expressed in tentacles.

The protein resides in the secreted. It is found in the nematocyst. Its subcellular location is the target cell membrane. Its function is as follows. May be involved in digestion of prey. Pore-forming protein that forms cations-selective hydrophilic pores of around 1 nm and causes cytolysis. Pore formation is a multi-step process that involves specific recognition of membrane sphingomyelin (but neither cholesterol nor phosphatidylcholine) using aromatic rich region and adjacent phosphocholine (POC) binding site, firm binding to the membrane (mainly driven by hydrophobic interactions) accompanied by the transfer of the N-terminal region to the lipid-water interface and finally pore formation after oligomerization of monomers. Shows hemolytic activity on equine erythrocytes. Hemolysis is highly inhibited in presence of sphingomyelin, suggesting that this protein targets sphingomyelin. The protein is Deep sea actinoporin Cjtox II of Cribrinopsis japonica (Deep-sea anemone).